A 340-amino-acid polypeptide reads, in one-letter code: Protein-tyrosine-phosphatase PTP1 (340 aa).

The Tyrosine-protein phosphatase domain maps to I58 to E326. Residues D234, C265 to R271, and Q311 each bind substrate. C265 serves as the catalytic Phosphocysteine intermediate.

In terms of assembly, interacts with MPK6. Interacts with KIN10. In terms of processing, phosphorylated by KIN10. In terms of tissue distribution, expressed in roots, stems and flowers, and at low levels in leaves.

It localises to the cytoplasm. It is found in the cytosol. The protein localises to the nucleus. It catalyses the reaction O-phospho-L-tyrosyl-[protein] + H2O = L-tyrosyl-[protein] + phosphate. Inhibited by hydrogen peroxide. Functionally, protein-tyrosine-phosphatase that dephosphorylates and probably inhibits MPK6 in non-oxidative stress conditions. In association with MKP1, represses salicylic acid (SA) and camalexin biosynthesis, thus modulating defense response. May also repress MPK3. Dephosphorylates and inactivates MPK4 in vitro. This chain is Protein-tyrosine-phosphatase PTP1 (PTP1), found in Arabidopsis thaliana (Mouse-ear cress).